The chain runs to 56 residues: Large ribosomal subunit protein bL33 (56 aa).

Belongs to the bacterial ribosomal protein bL33 family.

In Campylobacter hominis (strain ATCC BAA-381 / DSM 21671 / CCUG 45161 / LMG 19568 / NCTC 13146 / CH001A), this protein is Large ribosomal subunit protein bL33.